Reading from the N-terminus, the 543-residue chain is Zinc finger CCHC domain-containing protein 7 (543 aa).

Positions 51–71 (EEEHEEKNSGNSESSSSKPNQ) are disordered. The span at 59 to 68 (SGNSESSSSK) shows a compositional bias: low complexity. Glycyl lysine isopeptide (Lys-Gly) (interchain with G-Cter in SUMO2) cross-links involve residues lysine 131, lysine 139, lysine 141, lysine 239, and lysine 254. 3 consecutive CCHC-type zinc fingers follow at residues 241 to 258 (IICR…NCPL), 263 to 280 (RRCF…SCPA), and 304 to 321 (KQCD…ACTE). Lysine 339 participates in a covalent cross-link: Glycyl lysine isopeptide (Lys-Gly) (interchain with G-Cter in SUMO2). A CCHC-type 4 zinc finger spans residues 348-365 (AYCYHCAQKGHYGHECPE). Glycyl lysine isopeptide (Lys-Gly) (interchain with G-Cter in SUMO2) cross-links involve residues lysine 412, lysine 417, and lysine 435. Residues 414–543 (PYIKAANENP…FLIKQRKKKS (130 aa)) are disordered. Basic and acidic residues-rich tracts occupy residues 441–457 (QENK…NRNW) and 465–475 (RHREVDEDFPR). Lysine 478 participates in a covalent cross-link: Glycyl lysine isopeptide (Lys-Gly) (interchain with G-Cter in SUMO2). The span at 479-491 (TYSSPGSFKTQKP) shows a compositional bias: polar residues. Serine 482 and serine 485 each carry phosphoserine. Glycyl lysine isopeptide (Lys-Gly) (interchain with G-Cter in SUMO2) cross-links involve residues lysine 487, lysine 490, and lysine 493. Positions 493–502 (KPFHRSSHYH) are enriched in basic residues. Residues 503-515 (TSREDKSPKEGKR) are compositionally biased toward basic and acidic residues. Residue lysine 537 forms a Glycyl lysine isopeptide (Lys-Gly) (interchain with G-Cter in SUMO2) linkage.

In terms of assembly, component of a nucleolar TRAMP-like complex, an ATP-dependent exosome regulatory complex consisting of a helicase (MTREX), an oligadenylate polymerase (TENT4B or TENT4A), and a substrate specific RNA-binding factor (ZCCHC7 or ZCCHC8). Several TRAMP-like complexes exist with specific compositions and are associated with nuclear, or nucleolar RNA exosomes.

The protein localises to the nucleus. It is found in the nucleolus. This Homo sapiens (Human) protein is Zinc finger CCHC domain-containing protein 7 (ZCCHC7).